We begin with the raw amino-acid sequence, 255 residues long: Imidazole glycerol phosphate synthase subunit HisF (255 aa).

Active-site residues include aspartate 12 and aspartate 131.

Belongs to the HisA/HisF family. In terms of assembly, heterodimer of HisH and HisF.

It is found in the cytoplasm. The catalysed reaction is 5-[(5-phospho-1-deoxy-D-ribulos-1-ylimino)methylamino]-1-(5-phospho-beta-D-ribosyl)imidazole-4-carboxamide + L-glutamine = D-erythro-1-(imidazol-4-yl)glycerol 3-phosphate + 5-amino-1-(5-phospho-beta-D-ribosyl)imidazole-4-carboxamide + L-glutamate + H(+). It functions in the pathway amino-acid biosynthesis; L-histidine biosynthesis; L-histidine from 5-phospho-alpha-D-ribose 1-diphosphate: step 5/9. In terms of biological role, IGPS catalyzes the conversion of PRFAR and glutamine to IGP, AICAR and glutamate. The HisF subunit catalyzes the cyclization activity that produces IGP and AICAR from PRFAR using the ammonia provided by the HisH subunit. The chain is Imidazole glycerol phosphate synthase subunit HisF from Sphingopyxis alaskensis (strain DSM 13593 / LMG 18877 / RB2256) (Sphingomonas alaskensis).